Consider the following 1019-residue polypeptide: Probable inorganic carbon transporter subunit DabA 1 (1019 aa).

Zn(2+) is bound by residues Cys491 and Asp493. A disordered region spans residues 624-643; sequence VPTRLHSPRDEGSAAGGEGQ. The Zn(2+) site is built by His676 and Cys691.

Belongs to the inorganic carbon transporter (TC 9.A.2) DabA family. Forms a complex with DabB. It depends on Zn(2+) as a cofactor.

Its subcellular location is the cell inner membrane. Part of an energy-coupled inorganic carbon pump. The polypeptide is Probable inorganic carbon transporter subunit DabA 1 (Sorangium cellulosum (strain So ce56) (Polyangium cellulosum (strain So ce56))).